The sequence spans 273 residues: 2,3,4,5-tetrahydropyridine-2,6-dicarboxylate N-succinyltransferase (273 aa).

2 residues coordinate substrate: Arg104 and Asp141.

This sequence belongs to the transferase hexapeptide repeat family. In terms of assembly, homotrimer.

It localises to the cytoplasm. The enzyme catalyses (S)-2,3,4,5-tetrahydrodipicolinate + succinyl-CoA + H2O = (S)-2-succinylamino-6-oxoheptanedioate + CoA. Its pathway is amino-acid biosynthesis; L-lysine biosynthesis via DAP pathway; LL-2,6-diaminopimelate from (S)-tetrahydrodipicolinate (succinylase route): step 1/3. This is 2,3,4,5-tetrahydropyridine-2,6-dicarboxylate N-succinyltransferase from Buchnera aphidicola subsp. Schizaphis graminum (strain Sg).